The following is a 324-amino-acid chain: Delta-aminolevulinic acid dehydratase (324 aa).

Zn(2+) contacts are provided by cysteine 118, cysteine 120, and cysteine 128. The active-site Schiff-base intermediate with substrate is lysine 195. 5-aminolevulinate-binding residues include arginine 205 and arginine 217. Residue glutamate 233 coordinates Mg(2+). Lysine 248 functions as the Schiff-base intermediate with substrate in the catalytic mechanism. 5-aminolevulinate is bound by residues serine 274 and tyrosine 313.

The protein belongs to the ALAD family. Homooctamer. Zn(2+) serves as cofactor.

The catalysed reaction is 2 5-aminolevulinate = porphobilinogen + 2 H2O + H(+). The protein operates within porphyrin-containing compound metabolism; protoporphyrin-IX biosynthesis; coproporphyrinogen-III from 5-aminolevulinate: step 1/4. Functionally, catalyzes an early step in the biosynthesis of tetrapyrroles. Binds two molecules of 5-aminolevulinate per subunit, each at a distinct site, and catalyzes their condensation to form porphobilinogen. The polypeptide is Delta-aminolevulinic acid dehydratase (hemB) (Staphylococcus epidermidis (strain ATCC 12228 / FDA PCI 1200)).